The sequence spans 235 residues: Probable membrane-associated kinase regulator 6 (235 aa).

The tract at residues 108-140 (SAATEEESEPLDTTTSEKIDTRGLNSKPSPTSS) is disordered. Residues 130-140 (GLNSKPSPTSS) show a composition bias toward polar residues.

Its subcellular location is the cell membrane. Functionally, may be involved in abscisic acid signaling by acting as a kinase regulator. This is Probable membrane-associated kinase regulator 6 (MAKR6) from Arabidopsis thaliana (Mouse-ear cress).